A 618-amino-acid polypeptide reads, in one-letter code: Keratin, type I cytoskeletal 9 (618 aa).

The interval 1-49 is disordered; that stretch reads MSFRQISSSFRSSSGSSCGGGGGRGASRGSMRSSFGRSSRAGGESRFGS. A head region spans residues 1–137; that stretch reads MSFRQISSSF…GGEGSILNTN (137 aa). Residues 7–16 are compositionally biased toward low complexity; sequence SSSFRSSSGS. 2 positions are modified to phosphoserine: S14 and S17. The segment covering 17–26 has biased composition (gly residues); the sequence is SCGGGGGRGA. A compositionally biased stretch (low complexity) spans 27 to 49; the sequence is SRGSMRSSFGRSSRAGGESRFGS. The interval 138–173 is coil 1A; that stretch reads EKVVMQNLNSRLASYMDKVQELEEDNANLEKQIQEW. One can recognise an IF rod domain in the interval 138–450; it reads EKVVMQNLNS…KLLEGGQQDF (313 aa). Residues 174–192 are linker 1; sequence YSRKGNRVFQKDYSHYYNT. The coil 1B stretch occupies residues 193-284; that stretch reads IEDLKDRIVD…KSHKEEMNQL (92 aa). The linker 12 stretch occupies residues 285–307; that stretch reads TGLNDGDVNVEINVAPSTDLTQV. The tract at residues 308-446 is coil 2; it reads LNDMREEYEH…ETYRKLLEGG (139 aa). Residues 447 to 609 form a tail region; that stretch reads QQDFESSGAG…GGGNTRPSQS (163 aa). Positions 449–618 are disordered; it reads DFESSGAGQI…SQSSQIPRLR (170 aa). A compositionally biased stretch (gly residues) spans 456 to 603; the sequence is GQIGFGSGKG…GSGGSYGGGN (148 aa). Residues 607–618 show a composition bias toward low complexity; sequence SQSQSSQIPRLR.

This sequence belongs to the intermediate filament family. Heterotetramer of two type I and two type II keratins. As to expression, expressed in the perinuclear ring of spermatid manchettes within testis and in keratinocytes of the suprabasal layer of footpad epidermis (at protein level).

Its function is as follows. May serve an important special function either in the mature palmar and plantar skin tissue or in the morphogenetic program of the formation of these tissues. Plays a role in keratin filament assembly. May be involved in spermatid nuclear shaping and sperm development. The protein is Keratin, type I cytoskeletal 9 (Krt9) of Rattus norvegicus (Rat).